The primary structure comprises 414 residues: Serine/threonine transporter SstT (414 aa).

Transmembrane regions (helical) follow at residues 16–36 (GSLV…AWIS), 46–66 (LGTL…LMLV), 84–104 (ILFL…VFSF), 143–163 (ALLN…GFAL), 180–200 (AVTF…FGLV), 219–239 (LVVL…LLVF), 300–320 (MAGA…TLGV), and 332–352 (VVAS…LLLI).

This sequence belongs to the dicarboxylate/amino acid:cation symporter (DAACS) (TC 2.A.23) family.

It is found in the cell inner membrane. It carries out the reaction L-serine(in) + Na(+)(in) = L-serine(out) + Na(+)(out). The enzyme catalyses L-threonine(in) + Na(+)(in) = L-threonine(out) + Na(+)(out). Functionally, involved in the import of serine and threonine into the cell, with the concomitant import of sodium (symport system). This Salmonella dublin (strain CT_02021853) protein is Serine/threonine transporter SstT.